The following is a 115-amino-acid chain: 5-hydroxyisourate hydrolase (115 aa).

Residues 1 to 23 are disordered; the sequence is MSGLTTHILDQASGKPAAGVGVR. Substrate-binding residues include His-7, Arg-45, and Tyr-112.

Belongs to the transthyretin family. 5-hydroxyisourate hydrolase subfamily. Homotetramer.

The enzyme catalyses 5-hydroxyisourate + H2O = 5-hydroxy-2-oxo-4-ureido-2,5-dihydro-1H-imidazole-5-carboxylate + H(+). Functionally, catalyzes the hydrolysis of 5-hydroxyisourate (HIU) to 2-oxo-4-hydroxy-4-carboxy-5-ureidoimidazoline (OHCU). This Caulobacter vibrioides (strain ATCC 19089 / CIP 103742 / CB 15) (Caulobacter crescentus) protein is 5-hydroxyisourate hydrolase.